The following is a 372-amino-acid chain: Virion morphogenesis protein OPG132 (372 aa).

The protein belongs to the orthopoxvirus OPG132 family.

The protein localises to the host cytoplasm. It localises to the virion. Its function is as follows. Lipid-bound viral membrane assembly protein that plays an essential role in immature virion (IV) to mature virion (MV) transition. Functions in both crescent-shaped viral membranes formation and its enclosure to form immature virions. In addition, participates in targeting mature virion proteins to sites of virion assembly to ensure their correct localization. The polypeptide is Virion morphogenesis protein OPG132 (OPG132) (Homo sapiens (Human)).